Consider the following 650-residue polypeptide: Chaperone protein DnaK (650 aa).

Thr-200 bears the Phosphothreonine; by autocatalysis mark. Positions 612–632 are enriched in low complexity; that stretch reads GEGATAGAAAGAGAAGGQQAQ. The interval 612–650 is disordered; that stretch reads GEGATAGAAAGAGAAGGQQAQPQDDNVVDAEFKEVNDKK. Residues 641–650 are compositionally biased toward basic and acidic residues; sequence AEFKEVNDKK.

The protein belongs to the heat shock protein 70 family.

Functionally, acts as a chaperone. This Cupriavidus necator (strain ATCC 17699 / DSM 428 / KCTC 22496 / NCIMB 10442 / H16 / Stanier 337) (Ralstonia eutropha) protein is Chaperone protein DnaK.